The chain runs to 271 residues: Tryptophan synthase alpha chain (271 aa).

Catalysis depends on proton acceptor residues Glu49 and Asp60.

It belongs to the TrpA family. In terms of assembly, tetramer of two alpha and two beta chains.

It catalyses the reaction (1S,2R)-1-C-(indol-3-yl)glycerol 3-phosphate + L-serine = D-glyceraldehyde 3-phosphate + L-tryptophan + H2O. Its pathway is amino-acid biosynthesis; L-tryptophan biosynthesis; L-tryptophan from chorismate: step 5/5. The alpha subunit is responsible for the aldol cleavage of indoleglycerol phosphate to indole and glyceraldehyde 3-phosphate. The protein is Tryptophan synthase alpha chain of Burkholderia pseudomallei (strain K96243).